Reading from the N-terminus, the 192-residue chain is NADH-quinone oxidoreductase subunit C (192 aa).

Residues 170–192 (LGGIPVEYKGATVPPPDERRQYA) form a disordered region.

Belongs to the complex I 30 kDa subunit family. As to quaternary structure, NDH-1 is composed of 14 different subunits. Subunits NuoB, C, D, E, F, and G constitute the peripheral sector of the complex.

The protein resides in the cell membrane. The enzyme catalyses a quinone + NADH + 5 H(+)(in) = a quinol + NAD(+) + 4 H(+)(out). Functionally, NDH-1 shuttles electrons from NADH, via FMN and iron-sulfur (Fe-S) centers, to quinones in the respiratory chain. The immediate electron acceptor for the enzyme in this species is believed to be a menaquinone. Couples the redox reaction to proton translocation (for every two electrons transferred, four hydrogen ions are translocated across the cytoplasmic membrane), and thus conserves the redox energy in a proton gradient. The polypeptide is NADH-quinone oxidoreductase subunit C (Acidothermus cellulolyticus (strain ATCC 43068 / DSM 8971 / 11B)).